Consider the following 180-residue polypeptide: dCTP deaminase, dUMP-forming (180 aa).

DCTP is bound by residues 100–105 (RSSLGR), Asp-117, 125–127 (TLE), Gln-146, Tyr-160, and Gln-167. Residue Glu-127 is the Proton donor/acceptor of the active site.

The protein belongs to the dCTP deaminase family. Homotrimer.

It catalyses the reaction dCTP + 2 H2O = dUMP + NH4(+) + diphosphate. The protein operates within pyrimidine metabolism; dUMP biosynthesis; dUMP from dCTP: step 1/1. Functionally, bifunctional enzyme that catalyzes both the deamination of dCTP to dUTP and the hydrolysis of dUTP to dUMP without releasing the toxic dUTP intermediate. This chain is dCTP deaminase, dUMP-forming, found in Sulfurihydrogenibium sp. (strain YO3AOP1).